Here is a 71-residue protein sequence, read N- to C-terminus: Protein CYSTEINE-RICH TRANSMEMBRANE MODULE 6 (71 aa).

The span at Met-1–Ala-12 shows a compositional bias: polar residues. Residues Met-1–Thr-36 form a disordered region. The span at Pro-14 to Gly-30 shows a compositional bias: pro residues. The chain crosses the membrane as a helical span at residues Ser-48 to Cys-64.

The protein belongs to the CYSTM1 family. In terms of assembly, homodimer and heterodimers. Interacts with CYSTM7 and WIH1/CYSTM13. Mostly expressed in roots, stems, rosette leaves and siliques and, to a lower extent, in flowers and cauline leaves.

It localises to the cell membrane. Its subcellular location is the cytoplasm. Involved in resistance to abiotic stress. This Arabidopsis thaliana (Mouse-ear cress) protein is Protein CYSTEINE-RICH TRANSMEMBRANE MODULE 6.